Reading from the N-terminus, the 184-residue chain is Tumor necrosis factor alpha-induced protein 8-like protein 2 (184 aa).

Ser-3 carries the phosphoserine modification.

It belongs to the TNFAIP8 family. TNFAIP8L2 subfamily. May interact with CASP8; however, such result is unclear since could not reproduce the interaction with CASP8. Interacts with RAC1. Phosphorylated by TAK1/MAP3K7; this phosphorylation triggers association with BTRC and subsequent ubiquitination and degradation. Post-translationally, ubiquitinated in a BTRC-depdent manner; leading to degradation mediated through the proteasome pathway.

It is found in the cytoplasm. It localises to the nucleus. Its subcellular location is the lysosome. In terms of biological role, acts as a negative regulator of innate and adaptive immunity by maintaining immune homeostasis. Plays a regulatory role in the Toll-like signaling pathway by determining the strength of LPS-induced signaling and gene expression. Inhibits TCR-mediated T-cell activation and negatively regulate T-cell function to prevent hyperresponsiveness. Also inhibits autolysosome formation via negatively modulating MTOR activation by interacting with RAC1 and promoting the disassociation of the RAC1-MTOR complex. Plays an essential role in NK-cell biology by acting as a checkpoint and displaying an expression pattern correlating with NK-cell maturation process and by negatively regulating NK-cell maturation and antitumor immunity. Mechanistically, suppresses IL-15-triggered mTOR activity in NK-cells. The sequence is that of Tumor necrosis factor alpha-induced protein 8-like protein 2 (TNFAIP8L2) from Callithrix jacchus (White-tufted-ear marmoset).